We begin with the raw amino-acid sequence, 304 residues long: tRNA pseudouridine synthase B (304 aa).

The active-site Nucleophile is Asp-38.

The protein belongs to the pseudouridine synthase TruB family. Type 1 subfamily.

It catalyses the reaction uridine(55) in tRNA = pseudouridine(55) in tRNA. In terms of biological role, responsible for synthesis of pseudouridine from uracil-55 in the psi GC loop of transfer RNAs. The polypeptide is tRNA pseudouridine synthase B (Listeria monocytogenes serotype 4b (strain F2365)).